Here is a 549-residue protein sequence, read N- to C-terminus: FERM domain-containing protein 1 (549 aa).

The disordered stretch occupies residues 1–40; sequence MAVPPRGRGIDPARTNPDTFPPSGARCMEPSPERPACSQQ. In terms of domain architecture, FERM spans 54–369; the sequence is RDVLVLLPSR…DELELDLASR (316 aa). Disordered regions lie at residues 377 to 400 and 422 to 464; these read SSQH…YTSG and HGLH…GQSA. A compositionally biased stretch (low complexity) spans 430 to 443; that stretch reads SSSPRTSRSHPSTR. Polar residues predominate over residues 444–462; the sequence is GDSQATRQEPCTQVRTRGQ.

In Homo sapiens (Human), this protein is FERM domain-containing protein 1 (FRMD1).